Reading from the N-terminus, the 671-residue chain is DNA ligase (671 aa).

NAD(+) contacts are provided by residues 31–35 (DAEYD), 80–81 (SL), and E110. K112 functions as the N6-AMP-lysine intermediate in the catalytic mechanism. R133, E167, K283, and K307 together coordinate NAD(+). Zn(2+)-binding residues include C401, C404, C419, and C424. Residues 587 to 671 (EEELVFAGKT…YLPDEGGLNE (85 aa)) form the BRCT domain.

This sequence belongs to the NAD-dependent DNA ligase family. LigA subfamily. The cofactor is Mg(2+). It depends on Mn(2+) as a cofactor.

It catalyses the reaction NAD(+) + (deoxyribonucleotide)n-3'-hydroxyl + 5'-phospho-(deoxyribonucleotide)m = (deoxyribonucleotide)n+m + AMP + beta-nicotinamide D-nucleotide.. Functionally, DNA ligase that catalyzes the formation of phosphodiester linkages between 5'-phosphoryl and 3'-hydroxyl groups in double-stranded DNA using NAD as a coenzyme and as the energy source for the reaction. It is essential for DNA replication and repair of damaged DNA. The sequence is that of DNA ligase from Listeria monocytogenes serotype 4b (strain CLIP80459).